The following is a 398-amino-acid chain: LL-diaminopimelate aminotransferase (398 aa).

Y14 and G41 together coordinate substrate. Pyridoxal 5'-phosphate-binding positions include Y71, 104–105 (AK), Y128, N174, Y205, and 233–235 (SFS). Residues K105, Y128, and N174 each contribute to the substrate site. N6-(pyridoxal phosphate)lysine is present on K236. R244 and N275 together coordinate pyridoxal 5'-phosphate. Substrate contacts are provided by N275 and R368.

The protein belongs to the class-I pyridoxal-phosphate-dependent aminotransferase family. LL-diaminopimelate aminotransferase subfamily. In terms of assembly, homodimer. Pyridoxal 5'-phosphate serves as cofactor.

It carries out the reaction (2S,6S)-2,6-diaminopimelate + 2-oxoglutarate = (S)-2,3,4,5-tetrahydrodipicolinate + L-glutamate + H2O + H(+). It functions in the pathway amino-acid biosynthesis; L-lysine biosynthesis via DAP pathway; LL-2,6-diaminopimelate from (S)-tetrahydrodipicolinate (aminotransferase route): step 1/1. Functionally, involved in the synthesis of meso-diaminopimelate (m-DAP or DL-DAP), required for both lysine and peptidoglycan biosynthesis. Catalyzes the direct conversion of tetrahydrodipicolinate to LL-diaminopimelate. This is LL-diaminopimelate aminotransferase from Chlamydia felis (strain Fe/C-56) (Chlamydophila felis).